A 341-amino-acid chain; its full sequence is Glucokinase (341 aa).

18-23 (GDIGGT) contacts ATP.

This sequence belongs to the bacterial glucokinase family.

It localises to the cytoplasm. It carries out the reaction D-glucose + ATP = D-glucose 6-phosphate + ADP + H(+). The chain is Glucokinase from Mesorhizobium japonicum (strain LMG 29417 / CECT 9101 / MAFF 303099) (Mesorhizobium loti (strain MAFF 303099)).